The chain runs to 95 residues: Aspartyl/glutamyl-tRNA(Asn/Gln) amidotransferase subunit C (95 aa).

It belongs to the GatC family. In terms of assembly, heterotrimer of A, B and C subunits.

The catalysed reaction is L-glutamyl-tRNA(Gln) + L-glutamine + ATP + H2O = L-glutaminyl-tRNA(Gln) + L-glutamate + ADP + phosphate + H(+). The enzyme catalyses L-aspartyl-tRNA(Asn) + L-glutamine + ATP + H2O = L-asparaginyl-tRNA(Asn) + L-glutamate + ADP + phosphate + 2 H(+). Allows the formation of correctly charged Asn-tRNA(Asn) or Gln-tRNA(Gln) through the transamidation of misacylated Asp-tRNA(Asn) or Glu-tRNA(Gln) in organisms which lack either or both of asparaginyl-tRNA or glutaminyl-tRNA synthetases. The reaction takes place in the presence of glutamine and ATP through an activated phospho-Asp-tRNA(Asn) or phospho-Glu-tRNA(Gln). The sequence is that of Aspartyl/glutamyl-tRNA(Asn/Gln) amidotransferase subunit C from Xanthobacter autotrophicus (strain ATCC BAA-1158 / Py2).